We begin with the raw amino-acid sequence, 291 residues long: DNA N6-methyl adenine demethylase (291 aa).

A Fe2OG dioxygenase domain is found at 85-256 (GLTLIHNFLS…RGRRIALTMR (172 aa)). A 2-oxoglutarate-binding site is contributed by 171 to 173 (LEY). Fe cation-binding residues include His184, Asp186, and His239.

This sequence belongs to the alkB family. In terms of assembly, interacts with top-2; the interaction is required for localization of top-2 to DNA. Also interacts with mtss-1, his-24, ule-3, C18B2.3, pgl-1, ceh-93, mcm-4 and F37C4.5. Fe(2+) is required as a cofactor.

The protein localises to the nucleus. It catalyses the reaction an N(6)-methyl-2'-deoxyadenosine in DNA + 2-oxoglutarate + O2 = a 2'-deoxyadenosine in DNA + formaldehyde + succinate + CO2. In terms of biological role, dioxygenase that specifically demethylates DNA methylated on the 6th position of adenine (N(6)-methyladenosine) DNA. N(6)-methyladenosine (m6A) DNA is involved in epigenetic transgenerational inheritance. Plays an essential role in DNA replication and repair in the germline during meiosis. Binds to components of the DNA replication machinery such as top-2, and directs their localization to DNA to control DNA replication. This Caenorhabditis elegans protein is DNA N6-methyl adenine demethylase.